The primary structure comprises 347 residues: Microfibril-associated glycoprotein 3 (347 aa).

A signal peptide spans 1–22 (MKLHYCLCILLVVTFVPTALVL). Residues 23–139 (EDVTPLGTNQ…TLRVIFTSGD (117 aa)) lie on the Extracellular side of the membrane. Asn31, Asn36, Asn63, and Asn103 each carry an N-linked (GlcNAc...) asparagine glycan. In terms of domain architecture, Ig-like C2-type spans 47–130 (AGSYSGDDVI…SPTRASYSVT (84 aa)). Cys68 and Cys117 are joined by a disulfide. The helical transmembrane segment at 140 to 160 (MSVYYMVVCLIAFTITLILNV) threads the bilayer. The Cytoplasmic segment spans residues 161–347 (TRLCLMSTHL…SAEGSTHHRE (187 aa)). Residues 280 to 347 (NPELGRSNSP…SAEGSTHHRE (68 aa)) are disordered. Positions 311–331 (VHLQSETKSIGTDSQDSSHFS) are enriched in polar residues.

In terms of processing, glycosylated.

The protein localises to the cell membrane. Functionally, component of the elastin-associated microfibrils. The protein is Microfibril-associated glycoprotein 3 (Mfap3) of Rattus norvegicus (Rat).